The sequence spans 482 residues: Probable cytosol aminopeptidase (482 aa).

Lys251 and Asp256 together coordinate Mn(2+). Residue Lys263 is part of the active site. Residues Asp274, Asp333, and Glu335 each coordinate Mn(2+). Residue Arg337 is part of the active site.

Belongs to the peptidase M17 family. It depends on Mn(2+) as a cofactor.

The protein resides in the cytoplasm. The catalysed reaction is Release of an N-terminal amino acid, Xaa-|-Yaa-, in which Xaa is preferably Leu, but may be other amino acids including Pro although not Arg or Lys, and Yaa may be Pro. Amino acid amides and methyl esters are also readily hydrolyzed, but rates on arylamides are exceedingly low.. The enzyme catalyses Release of an N-terminal amino acid, preferentially leucine, but not glutamic or aspartic acids.. Its function is as follows. Presumably involved in the processing and regular turnover of intracellular proteins. Catalyzes the removal of unsubstituted N-terminal amino acids from various peptides. The chain is Probable cytosol aminopeptidase from Acinetobacter baumannii (strain AB307-0294).